Reading from the N-terminus, the 737-residue chain is Protein bicaudal D homolog (737 aa).

Coiled-coil stretches lie at residues 1 to 255 (MAES…RNAE), 292 to 319 (GSSD…EKIF), and 547 to 684 (AENE…DRDR). The segment at 72–97 (YRSQHQRSTRSELENEESLLEESSAK) is disordered. Residues 686–737 (VFKRSSTRAPTRETYQPPRAVRYPGSTTTAQQPAPSSSGGSRGGPRRGDNQQ) are disordered. The span at 710 to 719 (GSTTTAQQPA) shows a compositional bias: polar residues.

It belongs to the BicD family. In terms of assembly, component of a dynein-regulating complex composed of at least bicd-1, dlc-1 and egal-1. Interacts with egal-1 and unc-83. As to expression, expressed in the excretory cell, body wall muscles, vulval muscle cells, PVD and FLP sensory neurons and AVF interneurons.

The protein localises to the nucleus envelope. It localises to the perikaryon. The protein resides in the cell projection. Its subcellular location is the dendrite. Part of a complex with dlc-1 and egal-1, which is recruited to the nuclear envelope by unc-83, where in turn, it recruits dynein to the nuclear surface and regulates nuclear migration in hypodermal precursor cells. Required for the formation of dendritic branches of PVD sensory neurons. The polypeptide is Protein bicaudal D homolog (Caenorhabditis elegans).